The following is a 185-amino-acid chain: Elongation factor P (185 aa).

This sequence belongs to the elongation factor P family.

The protein resides in the cytoplasm. Its pathway is protein biosynthesis; polypeptide chain elongation. Involved in peptide bond synthesis. Stimulates efficient translation and peptide-bond synthesis on native or reconstituted 70S ribosomes in vitro. Probably functions indirectly by altering the affinity of the ribosome for aminoacyl-tRNA, thus increasing their reactivity as acceptors for peptidyl transferase. The chain is Elongation factor P from Thermoanaerobacter sp. (strain X514).